The chain runs to 604 residues: Putative sodium-dependent multivitamin transporter (604 aa).

Helical transmembrane passes span 4-24, 48-68, 78-98, 134-154, 160-180, and 188-208; these read LGAW…AIGI, VAPV…ILGV, MFVV…YLII, VLYM…VTGL, IVIV…KAVL, and LLMF…AGSL. Asparagine 222 and asparagine 225 each carry an N-linked (GlcNAc...) asparagine glycan. 7 helical membrane-spanning segments follow: residues 234-254, 273-293, 331-351, 389-409, 413-433, 440-460, and 511-531; these read HTWF…YGVN, ALWW…FSGL, LAGL…SSII, LFFG…GGLL, LSIF…GMYV, GAIG…FGQP, and ALGF…FALL.

Belongs to the sodium:solute symporter (SSF) (TC 2.A.21) family.

Its subcellular location is the cell membrane. The chain is Putative sodium-dependent multivitamin transporter from Drosophila melanogaster (Fruit fly).